Reading from the N-terminus, the 149-residue chain is Nucleoside diphosphate kinase 1 (149 aa).

6 residues coordinate ATP: K9, F57, R85, T91, R102, and N112. H115 serves as the catalytic Pros-phosphohistidine intermediate.

The protein belongs to the NDK family. As to quaternary structure, homohexamer. Can also form dodecamers. Mg(2+) serves as cofactor.

The protein resides in the nucleus. The enzyme catalyses a 2'-deoxyribonucleoside 5'-diphosphate + ATP = a 2'-deoxyribonucleoside 5'-triphosphate + ADP. The catalysed reaction is a ribonucleoside 5'-diphosphate + ATP = a ribonucleoside 5'-triphosphate + ADP. Its function is as follows. Major role in the synthesis of nucleoside triphosphates other than ATP. The ATP gamma phosphate is transferred to the NDP beta phosphate via a ping-pong mechanism, using a phosphorylated active-site intermediate. Involved in transcription regulation. Has G-quadruplex (G4) DNA-binding activity, which is independent of its nucleotide-binding and kinase activity. Binds folded G4 with low nanomolar affinity and corresponding unfolded G-rich DNA more weakly. Stabilizes folded G4s regardless of whether they are prefolded or not. The protein is Nucleoside diphosphate kinase 1 of Zea mays (Maize).